The primary structure comprises 242 residues: Probable 2-phosphosulfolactate phosphatase (242 aa).

It belongs to the ComB family. It depends on Mg(2+) as a cofactor.

The enzyme catalyses (2R)-O-phospho-3-sulfolactate + H2O = (2R)-3-sulfolactate + phosphate. This is Probable 2-phosphosulfolactate phosphatase from Prochlorococcus marinus (strain NATL2A).